The primary structure comprises 100 residues: UPF0213 protein FN1575 (100 aa).

The 77-residue stretch at M1–I77 folds into the GIY-YIG domain.

This sequence belongs to the UPF0213 family.

In Fusobacterium nucleatum subsp. nucleatum (strain ATCC 25586 / DSM 15643 / BCRC 10681 / CIP 101130 / JCM 8532 / KCTC 2640 / LMG 13131 / VPI 4355), this protein is UPF0213 protein FN1575.